Here is a 356-residue protein sequence, read N- to C-terminus: Phosphotriesterase-related protein (356 aa).

H23, H25, E175, H207, H236, and D304 together coordinate a divalent metal cation.

It belongs to the metallo-dependent hydrolases superfamily. Phosphotriesterase family. A divalent metal cation serves as cofactor.

The polypeptide is Phosphotriesterase-related protein (Aedes aegypti (Yellowfever mosquito)).